A 485-amino-acid polypeptide reads, in one-letter code: Velvet complex subunit B (485 aa).

A Velvet domain is found at 33–459 (GRKHYSLEVV…GNQGQKLPLA (427 aa)). The interval 107-353 (VLHPSSVDRH…PPPPRHTYTR (247 aa)) is disordered. 4 stretches are compositionally biased toward polar residues: residues 134–155 (APQS…TLSQ), 234–243 (RSPSSSTSDH), 267–304 (SISS…SPHS), and 326–341 (THSQ…QHVS).

The protein belongs to the velvet family. VelB subfamily. As to quaternary structure, component of the heterotrimeric velvet complex composed of laeA, veA and velB; VeA acting as a bridging protein between laeA and velB. Forms a heterodimeric complex with vosA; the formation of the velB-vosA complex is light-dependent.

It is found in the nucleus. Its subcellular location is the cytoplasm. Component of the velvet transcription factor complex that controls sexual/asexual developmental ratio in response to light, promoting sexual development in the darkness while stimulating asexual sporulation under illumination. The velvet complex acts as a global regulator for secondary metabolite gene expression. Component of the velB-VosA heterodimeric complex that plays a dual role in activating genes associated with spore maturation and repressing certain development-associated genes. The velB-VosA complex binds DNA through the DNA-binding domain of vosA that recognizes an 11-nucleotide consensus sequence 5'-CTGGCCGCGGC-3' consisting of two motifs in the promoters of key developmental regulatory genes. The protein is Velvet complex subunit B of Laccaria bicolor (strain S238N-H82 / ATCC MYA-4686) (Bicoloured deceiver).